The following is a 333-amino-acid chain: Ferrochelatase (333 aa).

Residues H202 and E284 each coordinate Fe cation.

The protein belongs to the ferrochelatase family.

The protein localises to the cytoplasm. It carries out the reaction heme b + 2 H(+) = protoporphyrin IX + Fe(2+). The protein operates within porphyrin-containing compound metabolism; protoheme biosynthesis; protoheme from protoporphyrin-IX: step 1/1. In terms of biological role, catalyzes the ferrous insertion into protoporphyrin IX. The chain is Ferrochelatase from Francisella tularensis subsp. mediasiatica (strain FSC147).